Here is a 417-residue protein sequence, read N- to C-terminus: Serine protease hepsin (417 aa).

Residues 1–23 are Cytoplasmic-facing; it reads MAQKEGGRTVPCCSRPKVAALTA. Residues 24–44 traverse the membrane as a helical; Signal-anchor for type II membrane protein segment; the sequence is GTLLLLTAIGAASWAIVAVLL. The Extracellular segment spans residues 45 to 417; it reads RSDQEPLYPV…SEASGMVTQL (373 aa). The region spanning 54–151 is the SRCR domain; that stretch reads VQVSSADARL…RGRFLATICQ (98 aa). 8 disulfide bridges follow: Cys-77/Cys-140, Cys-90/Cys-150, Cys-119/Cys-138, Cys-153/Cys-277, Cys-188/Cys-204, Cys-291/Cys-359, Cys-322/Cys-338, and Cys-349/Cys-381. An N-linked (GlcNAc...) asparagine glycan is attached at Asn-112. Residues 163–405 form the Peptidase S1 domain; that stretch reads IVGGRDTSLG…FREWIFQAIK (243 aa). Catalysis depends on charge relay system residues His-203 and Asp-257. Ser-353 serves as the catalytic Charge relay system.

Belongs to the peptidase S1 family.

Its subcellular location is the membrane. It catalyses the reaction Cleavage after basic amino-acid residues, with Arg strongly preferred to Lys.. Plays an essential role in cell growth and maintenance of cell morphology. May mediate the activating cleavage of HGF and MST1/HGFL. Plays a role in the proteolytic processing of ACE2. The chain is Serine protease hepsin (HPN) from Pongo abelii (Sumatran orangutan).